A 297-amino-acid chain; its full sequence is Formylmethanofuran--tetrahydromethanopterin formyltransferase (297 aa).

The protein belongs to the FTR family. Homotetramer.

Its subcellular location is the cytoplasm. It catalyses the reaction N-formylmethanofuran + 5,6,7,8-tetrahydromethanopterin + H(+) = N(5)-formyl-5,6,7,8-tetrahydromethanopterin + methanofuran. It participates in metabolic intermediate metabolism; lactate oxidation. In terms of biological role, catalyzes the transfer of a formyl group from 5-formyl tetrahydromethanopterin (5-formyl-H(4)MPT) to methanofuran (MFR) to produce formylmethanofuran (formyl-MFR) and tetrahydromethanopterin (H(4)MPT). This chain is Formylmethanofuran--tetrahydromethanopterin formyltransferase, found in Archaeoglobus fulgidus (strain ATCC 49558 / DSM 4304 / JCM 9628 / NBRC 100126 / VC-16).